We begin with the raw amino-acid sequence, 503 residues long: Cobyric acid synthase (503 aa).

Positions 260–453 constitute a GATase cobBQ-type domain; that stretch reads KIGVAAIYFP…FHALFDESSV (194 aa). The Nucleophile role is filled by Cys341. His445 is a catalytic residue.

This sequence belongs to the CobB/CobQ family. CobQ subfamily.

The protein operates within cofactor biosynthesis; adenosylcobalamin biosynthesis. Catalyzes amidations at positions B, D, E, and G on adenosylcobyrinic A,C-diamide. NH(2) groups are provided by glutamine, and one molecule of ATP is hydrogenolyzed for each amidation. The sequence is that of Cobyric acid synthase from Pelodictyon phaeoclathratiforme (strain DSM 5477 / BU-1).